Reading from the N-terminus, the 367-residue chain is Peptide chain release factor 2 (367 aa).

Glutamine 251 carries the N5-methylglutamine modification.

Belongs to the prokaryotic/mitochondrial release factor family. In terms of processing, methylated by PrmC. Methylation increases the termination efficiency of RF2.

The protein localises to the cytoplasm. In terms of biological role, peptide chain release factor 2 directs the termination of translation in response to the peptide chain termination codons UGA and UAA. The sequence is that of Peptide chain release factor 2 from Nautilia profundicola (strain ATCC BAA-1463 / DSM 18972 / AmH).